Reading from the N-terminus, the 142-residue chain is Sec-independent protein translocase protein TatB (142 aa).

Residues M1–G21 form a helical membrane-spanning segment. Residues A99–A142 are disordered. A compositionally biased stretch (low complexity) spans S107–Q124.

The protein belongs to the TatB family. The Tat system comprises two distinct complexes: a TatABC complex, containing multiple copies of TatA, TatB and TatC subunits, and a separate TatA complex, containing only TatA subunits. Substrates initially bind to the TatABC complex, which probably triggers association of the separate TatA complex to form the active translocon.

Its subcellular location is the cell inner membrane. Its function is as follows. Part of the twin-arginine translocation (Tat) system that transports large folded proteins containing a characteristic twin-arginine motif in their signal peptide across membranes. Together with TatC, TatB is part of a receptor directly interacting with Tat signal peptides. TatB may form an oligomeric binding site that transiently accommodates folded Tat precursor proteins before their translocation. The sequence is that of Sec-independent protein translocase protein TatB from Azoarcus sp. (strain BH72).